A 66-amino-acid chain; its full sequence is UPF0337 protein SAG0619 (66 aa).

Residues 1-22 are disordered; that stretch reads MSQEKLKSKLDQAKGGAKEGFG.

It belongs to the UPF0337 (CsbD) family.

In Streptococcus agalactiae serotype V (strain ATCC BAA-611 / 2603 V/R), this protein is UPF0337 protein SAG0619.